The primary structure comprises 88 residues: Probable small nuclear ribonucleoprotein F (88 aa).

In terms of domain architecture, Sm spans 7 to 79 (NPKPFLNNLT…VLYVRGVPED (73 aa)).

Belongs to the snRNP Sm proteins family. SmF/LSm6 subfamily.

Its subcellular location is the nucleus. Probable common Sm protein, is found in U1 and U2 snRNPs and may be part of the spliceosome. This Arabidopsis thaliana (Mouse-ear cress) protein is Probable small nuclear ribonucleoprotein F.